The following is a 327-amino-acid chain: Chromatin modification-related protein eaf3 (327 aa).

One can recognise a Tudor-knot domain in the interval 13-66; sequence ERVLCFHHEILYEAKILDLRHTDPDDRKSPYEYLVHYKGWKNTWDDWVPQDRLR. The interval 85–132 is disordered; that stretch reads AALRQKSTKTSLKKKGGSDHSSARGSEERQTSVPGRGTKRARDNDIEK. Residues 100–114 show a composition bias toward basic and acidic residues; it reads GGSDHSSARGSEERQ. In terms of domain architecture, MRG spans 138 to 312; it reads TRPSVRIVMP…ASNEYIEKSR (175 aa).

The protein belongs to the MRG family. As to quaternary structure, component of the NuA4 histone acetyltransferase complex.

Its subcellular location is the nucleus. Involved in deacetylation of histones, chromatin assembly and chromosome segregation. May act as a transcriptional oscillator, directing histone deacetylases to specific chromosomal domains. Component of the NuA4 histone acetyltransferase complex which is involved in transcriptional activation of selected genes principally by acetylation of nucleosomal histone H4 and H2A. The NuA4 complex is also involved in DNA repair. The polypeptide is Chromatin modification-related protein eaf3 (eaf3) (Emericella nidulans (strain FGSC A4 / ATCC 38163 / CBS 112.46 / NRRL 194 / M139) (Aspergillus nidulans)).